The following is a 315-amino-acid chain: Small ribosomal subunit protein mS45 (315 aa).

A mitochondrion-targeting transit peptide spans 1–66 (MRNSVEFSQL…SKYVACNSRS (66 aa)).

This sequence belongs to the mitochondrion-specific ribosomal protein mS45 family. As to quaternary structure, component of the mitochondrial small ribosomal subunit (mt-SSU). Mature yeast 74S mitochondrial ribosomes consist of a small (37S) and a large (54S) subunit. The 37S small subunit contains a 15S ribosomal RNA (15S mt-rRNA) and at least 32 different proteins. The 54S large subunit contains a 21S rRNA (21S mt-rRNA) and at least 45 different proteins.

It is found in the mitochondrion. Its function is as follows. Component of the mitochondrial ribosome (mitoribosome), a dedicated translation machinery responsible for the synthesis of mitochondrial genome-encoded proteins, including at least some of the essential transmembrane subunits of the mitochondrial respiratory chain. The mitoribosomes are attached to the mitochondrial inner membrane and translation products are cotranslationally integrated into the membrane. Required for mitochondrial protein synthesis. Has a role in mitochondrial integrity and cell respiration. In Schizosaccharomyces pombe (strain 972 / ATCC 24843) (Fission yeast), this protein is Small ribosomal subunit protein mS45 (bot1).